The sequence spans 505 residues: RNA-splicing ligase RtcB homolog (505 aa).

Mn(2+) is bound by residues Asp-119, Cys-122, His-227, His-259, and His-353. Residue 226–230 (NHYAE) participates in GMP binding. GMP contacts are provided by residues 353–354 (HN), 402–405 (GGTM), Ser-409, 428–431 (HGAG), and Lys-504. The active-site GMP-histidine intermediate is the His-428.

The protein belongs to the RtcB family. Catalytic component of the tRNA-splicing ligase complex. Mn(2+) is required as a cofactor.

The enzyme catalyses a 3'-end 3'-phospho-ribonucleotide-RNA + a 5'-end dephospho-ribonucleoside-RNA + GTP = a ribonucleotidyl-ribonucleotide-RNA + GMP + diphosphate. It carries out the reaction a 3'-end 2',3'-cyclophospho-ribonucleotide-RNA + a 5'-end dephospho-ribonucleoside-RNA + GTP + H2O = a ribonucleotidyl-ribonucleotide-RNA + GMP + diphosphate + H(+). Functionally, catalytic subunit of the tRNA-splicing ligase complex that acts by directly joining spliced tRNA halves to mature-sized tRNAs by incorporating the precursor-derived splice junction phosphate into the mature tRNA as a canonical 3',5'-phosphodiester. May act as an RNA ligase with broad substrate specificity, and may function toward other RNAs. In Nematostella vectensis (Starlet sea anemone), this protein is RNA-splicing ligase RtcB homolog.